Reading from the N-terminus, the 452-residue chain is Oxygen-independent coproporphyrinogen III oxidase (452 aa).

The 234-residue stretch at 45–278 (LDPAVPISVY…ANLAAKMFTE (234 aa)) folds into the Radical SAM core domain. Residue tyrosine 54 participates in S-adenosyl-L-methionine binding. [4Fe-4S] cluster contacts are provided by cysteine 60 and cysteine 64. Phenylalanine 66 contributes to the S-adenosyl-L-methionine binding site. [4Fe-4S] cluster is bound at residue cysteine 67. S-adenosyl-L-methionine-binding positions include glycine 111, 112 to 113 (GT), glutamate 144, glutamine 171, arginine 183, aspartate 208, alanine 242, and isoleucine 328.

Belongs to the anaerobic coproporphyrinogen-III oxidase family. Monomer. It depends on [4Fe-4S] cluster as a cofactor.

It is found in the cytoplasm. It catalyses the reaction coproporphyrinogen III + 2 S-adenosyl-L-methionine = protoporphyrinogen IX + 2 5'-deoxyadenosine + 2 L-methionine + 2 CO2. The protein operates within porphyrin-containing compound metabolism; protoporphyrin-IX biosynthesis; protoporphyrinogen-IX from coproporphyrinogen-III (AdoMet route): step 1/1. Its function is as follows. Involved in the heme and chlorophyll biosynthesis. Catalyzes the anaerobic oxidative decarboxylation of propionate groups of rings A and B of coproporphyrinogen III to yield the vinyl groups in protoporphyrinogen IX. The polypeptide is Oxygen-independent coproporphyrinogen III oxidase (hemN) (Cereibacter sphaeroides (strain ATCC 17025 / ATH 2.4.3) (Rhodobacter sphaeroides)).